The chain runs to 1448 residues: DNA-directed RNA polymerase subunit beta' (1448 aa).

4 residues coordinate Zn(2+): cysteine 66, cysteine 68, cysteine 81, and cysteine 84. Mg(2+) contacts are provided by aspartate 474, aspartate 476, and aspartate 478. The Zn(2+) site is built by cysteine 814, cysteine 888, cysteine 895, and cysteine 898. The tract at residues 1408–1448 (LEELQAAIGGDGESPSGDGAAGDGAPSEEDVEQIEASGSEN) is disordered.

The protein belongs to the RNA polymerase beta' chain family. As to quaternary structure, the RNAP catalytic core consists of 2 alpha, 1 beta, 1 beta' and 1 omega subunit. When a sigma factor is associated with the core the holoenzyme is formed, which can initiate transcription. Requires Mg(2+) as cofactor. Zn(2+) is required as a cofactor.

The catalysed reaction is RNA(n) + a ribonucleoside 5'-triphosphate = RNA(n+1) + diphosphate. DNA-dependent RNA polymerase catalyzes the transcription of DNA into RNA using the four ribonucleoside triphosphates as substrates. The polypeptide is DNA-directed RNA polymerase subunit beta' (Salinibacter ruber (strain DSM 13855 / M31)).